The primary structure comprises 237 residues: 2,3,4,5-tetrahydropyridine-2,6-dicarboxylate N-acetyltransferase (237 aa).

Belongs to the transferase hexapeptide repeat family. DapH subfamily.

It catalyses the reaction (S)-2,3,4,5-tetrahydrodipicolinate + acetyl-CoA + H2O = L-2-acetamido-6-oxoheptanedioate + CoA. It functions in the pathway amino-acid biosynthesis; L-lysine biosynthesis via DAP pathway; LL-2,6-diaminopimelate from (S)-tetrahydrodipicolinate (acetylase route): step 1/3. Its function is as follows. Catalyzes the transfer of an acetyl group from acetyl-CoA to tetrahydrodipicolinate. The polypeptide is 2,3,4,5-tetrahydropyridine-2,6-dicarboxylate N-acetyltransferase (Limosilactobacillus fermentum (strain NBRC 3956 / LMG 18251) (Lactobacillus fermentum)).